The following is a 253-amino-acid chain: Sulfate transporter CysZ (253 aa).

The next 4 membrane-spanning stretches (helical) occupy residues 31–51, 75–95, 151–171, and 222–242; these read FVIL…WWLF, LLWP…FSTI, IVLL…PVLW, and IPLL…AMWV.

The protein belongs to the CysZ family.

It localises to the cell inner membrane. Its function is as follows. High affinity, high specificity proton-dependent sulfate transporter, which mediates sulfate uptake. Provides the sulfur source for the cysteine synthesis pathway. The sequence is that of Sulfate transporter CysZ from Shigella flexneri serotype 5b (strain 8401).